We begin with the raw amino-acid sequence, 144 residues long: Large ribosomal subunit protein uL15 (144 aa).

A disordered region spans residues 1-48 (MIKLESLQDPSPRKRRTKLLGRGPSSGHGKTSCRGHKGDGSRSGYKRR).

This sequence belongs to the universal ribosomal protein uL15 family. In terms of assembly, part of the 50S ribosomal subunit.

In terms of biological role, binds to the 23S rRNA. The polypeptide is Large ribosomal subunit protein uL15 (Chlamydia abortus (strain DSM 27085 / S26/3) (Chlamydophila abortus)).